We begin with the raw amino-acid sequence, 141 residues long: Hemoglobin subunit alpha (141 aa).

Residues Val1 to Arg141 form the Globin domain. Phosphoserine is present on Ser3. N6-succinyllysine is present on residues Lys7 and Lys11. Lys16 is subject to N6-acetyllysine; alternate. The residue at position 16 (Lys16) is an N6-succinyllysine; alternate. At Tyr24 the chain carries Phosphotyrosine. Residue Lys40 is modified to N6-succinyllysine. The residue at position 49 (Ser49) is a Phosphoserine. Position 58 (His58) interacts with O2. His87 is a binding site for heme b. Ser102 carries the phosphoserine modification. Phosphothreonine is present on Thr108. Ser124 and Ser131 each carry phosphoserine. Residues Thr134 and Thr137 each carry the phosphothreonine modification. Ser138 is subject to Phosphoserine.

Belongs to the globin family. As to quaternary structure, heterotetramer of two alpha chains and two beta chains. In terms of tissue distribution, red blood cells.

In terms of biological role, involved in oxygen transport from the lung to the various peripheral tissues. Functionally, hemopressin acts as an antagonist peptide of the cannabinoid receptor CNR1. Hemopressin-binding efficiently blocks cannabinoid receptor CNR1 and subsequent signaling. The sequence is that of Hemoglobin subunit alpha (HBA) from Ondatra zibethicus (Muskrat).